Here is a 706-residue protein sequence, read N- to C-terminus: Vitamin B12-dependent ribonucleoside-diphosphate reductase (706 aa).

One can recognise an ATP-cone domain in the interval 21–109 (AKVRRRDGTL…IYRQRRAELR (89 aa)). Substrate is bound by residues serine 191, 206–207 (GC), glycine 235, 389–393 (NPCGE), and 534–538 (PTGTI). Residues cysteine 207 and cysteine 402 are joined by a disulfide bond. The Proton acceptor role is filled by asparagine 389. Catalysis depends on cysteine 391, which acts as the Cysteine radical intermediate. Catalysis depends on glutamate 393, which acts as the Proton acceptor.

This sequence belongs to the ribonucleoside diphosphate reductase class-2 family. It depends on adenosylcob(III)alamin as a cofactor.

The catalysed reaction is a 2'-deoxyribonucleoside 5'-diphosphate + [thioredoxin]-disulfide + H2O = a ribonucleoside 5'-diphosphate + [thioredoxin]-dithiol. Functionally, provides the precursors necessary for DNA synthesis. Catalyzes the biosynthesis of deoxyribonucleotides from the corresponding ribonucleotides. This is Vitamin B12-dependent ribonucleoside-diphosphate reductase (nrdZ) from Mycobacterium tuberculosis (strain ATCC 25618 / H37Rv).